Reading from the N-terminus, the 101-residue chain is Cysteine-rich and transmembrane domain-containing protein B (101 aa).

The tract at residues 1 to 80 (MSQQPPAVGV…PQQQQQQKHS (80 aa)) is disordered. Residues 24-43 (DAYPPPGQPYPQQGYPPPQG) are compositionally biased toward pro residues. A compositionally biased stretch (low complexity) spans 59-77 (YPEQGYPQQGYPPQQQQQQ). A helical membrane pass occupies residues 78 to 95 (KHSPGMLEGCIAALCCYC).

Belongs to the CYSTM1 family.

The protein resides in the membrane. The chain is Cysteine-rich and transmembrane domain-containing protein B from Arabidopsis thaliana (Mouse-ear cress).